Here is a 321-residue protein sequence, read N- to C-terminus: ATP-dependent 6-phosphofructokinase (321 aa).

Position 12 (Gly12) interacts with ATP. Residue 22–26 (RGVVR) participates in ADP binding. Residues 73–74 (RF) and 103–106 (GDGS) each bind ATP. Asp104 provides a ligand contact to Mg(2+). A substrate-binding site is contributed by 127–129 (TID). Asp129 serves as the catalytic Proton acceptor. Arg156 is an ADP binding site. Substrate-binding positions include Arg164 and 171–173 (MGR). ADP-binding positions include 187-189 (GCE), Lys213, and 215-217 (KRH). Substrate-binding positions include Glu224, Arg245, and 251 to 254 (HTQR).

Belongs to the phosphofructokinase type A (PFKA) family. ATP-dependent PFK group I subfamily. Prokaryotic clade 'B1' sub-subfamily. Homotetramer. The cofactor is Mg(2+).

The protein resides in the cytoplasm. It catalyses the reaction beta-D-fructose 6-phosphate + ATP = beta-D-fructose 1,6-bisphosphate + ADP + H(+). It functions in the pathway carbohydrate degradation; glycolysis; D-glyceraldehyde 3-phosphate and glycerone phosphate from D-glucose: step 3/4. Allosterically activated by ADP and other diphosphonucleosides, and allosterically inhibited by phosphoenolpyruvate. Functionally, catalyzes the phosphorylation of D-fructose 6-phosphate to fructose 1,6-bisphosphate by ATP, the first committing step of glycolysis. The protein is ATP-dependent 6-phosphofructokinase of Glaesserella parasuis serovar 5 (strain SH0165) (Haemophilus parasuis).